We begin with the raw amino-acid sequence, 425 residues long: MSDQDNTQTSSSKLAPHHNIFMANLESSPTKDRNTSSQNASSSRVIESLHDQIDMLTKTNLQLTTQSQNLLSKLELAQSKESKLLENLNLLKNENENLNSIFERKNKKLKELEKDYSELSNRYNEQKEKMDQLSKLAKNSSAIEQSCSEKLQNMEVNYNSLLESQNLYRDHYSDEISKLNEKIGLLELELSNQNLNYGSDTSSNSDIELNLNKFNDSVKDLKSLETEKDSKLSKIITHSLDELNLQSWLNLYQTNENLISTFAEKMDLKDVLKRNDEKISNKGAVVQTLKKNVQTQVESNNADALSSNNAQDMLPIKMVKLRKTPNTNDSSSNGNSSNNKRRSFYTASPLLSSGSIPKSASPVLPGVKRTASVRKPSSSSSKTNVTHNNDPSTSPTISVPPGVTRTVSSTHKKKGNSMVVHGAQS.

The interval N24–V45 is disordered. Positions T35 to V45 are enriched in polar residues. Residues Q68–Y197 adopt a coiled-coil conformation. The tract at residues R322 to S425 is disordered. The segment covering N326–N338 has biased composition (low complexity). S343 bears the Phosphoserine mark. Polar residues-rich tracts occupy residues Y345 to K358 and K382 to I397. A Phosphoserine modification is found at S394.

The protein belongs to the SHE3 family. Interacts with SHE2 and MYO4.

The protein resides in the endoplasmic reticulum membrane. Its function is as follows. RNA-binding protein that binds specific mRNAs including the ASH1 mRNA, coding for a repressor of the HO endonuclease. Part of the mRNA localization machinery that restricts accumulation of certain proteins to the bud and in the daughter cell. Required for the delivery of cortical endoplasmic reticulum into the emerging bud. This is SWI5-dependent HO expression protein 3 (SHE3) from Saccharomyces cerevisiae (strain ATCC 204508 / S288c) (Baker's yeast).